Consider the following 512-residue polypeptide: Cytochrome P450 84A4 (512 aa).

Residues 7-24 (LIVLVPLLLFLFPHLLLR) form a helical membrane-spanning segment. C447 lines the heme pocket.

This sequence belongs to the cytochrome P450 family. The cofactor is heme. Expressed in seedlings, roots, stems and inflorescence nodes. Low or no expression in leaves, flowers, seeds and lignifying tissue.

It localises to the membrane. In terms of biological role, cytochrome P450 involved in the production of catechol-substituted substrates needed for the arabidopyrones biosynthesis. Converts p-coumaraldehyde into caffealdehyde. The polypeptide is Cytochrome P450 84A4 (CYP84A4) (Arabidopsis thaliana (Mouse-ear cress)).